The sequence spans 75 residues: Tetrahydromethanopterin S-methyltransferase subunit F (75 aa).

The chain crosses the membrane as a helical span at residues 53–73 (FAGLACGMVFAGVLLVPLLLL).

The protein belongs to the MtrF family. As to quaternary structure, the complex is composed of 8 subunits; MtrA, MtrB, MtrC, MtrD, MtrE, MtrF, MtrG and MtrH.

Its subcellular location is the cell membrane. The enzyme catalyses 5-methyl-5,6,7,8-tetrahydromethanopterin + coenzyme M + 2 Na(+)(in) = 5,6,7,8-tetrahydromethanopterin + methyl-coenzyme M + 2 Na(+)(out). It functions in the pathway one-carbon metabolism; methanogenesis from CO(2); methyl-coenzyme M from 5,10-methylene-5,6,7,8-tetrahydromethanopterin: step 2/2. Functionally, part of a complex that catalyzes the formation of methyl-coenzyme M and tetrahydromethanopterin from coenzyme M and methyl-tetrahydromethanopterin. This is an energy-conserving, sodium-ion translocating step. The chain is Tetrahydromethanopterin S-methyltransferase subunit F from Methanopyrus kandleri (strain AV19 / DSM 6324 / JCM 9639 / NBRC 100938).